The following is a 219-amino-acid chain: Acetylxylan esterase (219 aa).

The active-site Nucleophile is the S15. Residues D191 and H194 each act as charge relay system in the active site.

It belongs to the 'GDSL' lipolytic enzyme family. As to quaternary structure, homooctamer, presenting a unique donut-shaped quaternary structure built of two staggered tetrameric rings. The eight active sites are organized in four closely situated pairs, which face the relatively wide internal cavity.

The protein resides in the cytoplasm. It catalyses the reaction Deacetylation of xylans and xylo-oligosaccharides.. It participates in glycan degradation; xylan degradation. Acetylxylan esterase involved in the degradation of xylan, a major structural heterogeneous polysaccharide found in plant biomass representing the second most abundant polysaccharide in the biosphere, after cellulose. Cleaves acetyl side groups from the xylose backbone units of the hemicellulolytic polymer xylan and xylo-oligosaccharides. Hydrolyzes about 20%-30% of the available acetyl groups on fully acetylated birch wood xylan. Completely deacetylates xylobiose peracetate (fully acetylated), and is active on both the alpha- and beta-forms of the sugar. Also hydrolyzes fully acetylated methyl-beta-D-xylopyranoside and methyl-beta-D-glucopyranoside, and the synthetic substrates 2-naphthyl acetate, 4-nitrophenyl acetate, 4-methylumbelliferyl acetate, and phenyl acetate. This chain is Acetylxylan esterase, found in Geobacillus stearothermophilus (Bacillus stearothermophilus).